A 347-amino-acid chain; its full sequence is DNA-directed RNA polymerase subunit alpha (347 aa).

Positions 1-226 (MLISQRPTLS…ELFGLARELN (226 aa)) are alpha N-terminal domain (alpha-NTD). The segment at 243 to 347 (HIASFALPID…SQDYAETEQL (105 aa)) is alpha C-terminal domain (alpha-CTD). The interval 326–347 (TTGTWSTDGAYDSQDYAETEQL) is disordered.

It belongs to the RNA polymerase alpha chain family. Homodimer. The RNAP catalytic core consists of 2 alpha, 1 beta, 1 beta' and 1 omega subunit. When a sigma factor is associated with the core the holoenzyme is formed, which can initiate transcription.

The enzyme catalyses RNA(n) + a ribonucleoside 5'-triphosphate = RNA(n+1) + diphosphate. DNA-dependent RNA polymerase catalyzes the transcription of DNA into RNA using the four ribonucleoside triphosphates as substrates. This Mycobacterium leprae (strain TN) protein is DNA-directed RNA polymerase subunit alpha.